We begin with the raw amino-acid sequence, 111 residues long: Ribosome-binding factor A (111 aa).

It belongs to the RbfA family. As to quaternary structure, monomer. Binds 30S ribosomal subunits, but not 50S ribosomal subunits or 70S ribosomes.

The protein localises to the cytoplasm. One of several proteins that assist in the late maturation steps of the functional core of the 30S ribosomal subunit. Associates with free 30S ribosomal subunits (but not with 30S subunits that are part of 70S ribosomes or polysomes). Required for efficient processing of 16S rRNA. May interact with the 5'-terminal helix region of 16S rRNA. This chain is Ribosome-binding factor A, found in Helicobacter pylori (strain P12).